The chain runs to 535 residues: Probable fucosyltransferase 4 (535 aa).

Topologically, residues 1 to 20 (MYHIFQISGEVIKGLGLKTK) are cytoplasmic. Residues 21 to 41 (ILITIVFSTLLILSVMLLSFS) form a helical; Signal-anchor for type II membrane protein membrane-spanning segment. Residues 42–535 (NNFNNKLFAA…IWGLKLFDEL (494 aa)) are Lumenal-facing. 5 N-linked (GlcNAc...) asparagine glycosylation sites follow: N136, N226, N230, N377, and N409.

The protein belongs to the glycosyltransferase 37 family. Expressed in roots, stems, leaves, flowers, siliques and seedlings.

It localises to the golgi apparatus. It is found in the golgi stack membrane. It participates in protein modification; protein glycosylation. Functionally, may be involved in cell wall biosynthesis. May act as a fucosyltransferase. The chain is Probable fucosyltransferase 4 (FUT4) from Arabidopsis thaliana (Mouse-ear cress).